Consider the following 200-residue polypeptide: Eukaryotic translation initiation factor isoform 4E (200 aa).

The tract at residues 1 to 22 (MATEAPIEATEVPPASATETVA) is disordered. MRNA is bound by residues 44–49 (QGAAWG), Lys76, and 94–95 (WE). Cys99 and Cys138 form a disulfide bridge. MRNA-binding positions include 145 to 150 (RRSQDK) and 189 to 192 (KRER).

Belongs to the eukaryotic initiation factor 4E family. EIF4F is a multi-subunit complex, the composition of which varies with external and internal environmental conditions. It is composed of at least EIF4A, EIF4E and EIF4G. EIF4E is also known to interact with other partners. In higher plants two isoforms of EIF4F have been identified, named isoform EIF4F and isoform EIF(iso)4F. Isoform EIF4F has subunits p220 and p26, whereas isoform EIF(iso)4F has subunits p82 and p28. As to quaternary structure, (Microbial infection) Interacts with viral genome-linked protein (VPg); this interaction is possible in susceptible hosts but impaired in resistant plants. According to the redox status, the Cys-99-Cys-138 disulfide bridge may have a role in regulating protein function by affecting its ability to bind capped mRNA. In terms of tissue distribution, expressed ubiquitously in seedlings, roots, leaves, sepals, petals, anthers and dehisced pollen, with highest levels in pollen, maturing anthers and roots. Strongly expressed in susceptible plants but not in resistant ones.

It is found in the cytoplasm. The protein resides in the nucleus. Its function is as follows. Component of the protein complex eIF4F, which is involved in the recognition of the mRNA cap, ATP-dependent unwinding of 5'-terminal secondary structure and recruitment of mRNA to the ribosome. Recognizes and binds the 7-methylguanosine-containing mRNA cap during an early step in the initiation of protein synthesis and facilitates ribosome binding by inducing the unwinding of the mRNAs secondary structures. Key component of recessive resistance to potyviruses. In terms of biological role, (Microbial infection) Susceptibility host factor required for viral infection (e.g. potato virus Y (PVY) and pepper mottle virus (PepMoV)) by recruiting viral RNAs to the host ribosomal complex via an interaction with viral genome-linked protein (VPg). This chain is Eukaryotic translation initiation factor isoform 4E, found in Nicotiana tabacum (Common tobacco).